Here is a 426-residue protein sequence, read N- to C-terminus: NADH-quinone oxidoreductase subunit H 1 (426 aa).

A run of 10 helical transmembrane segments spans residues 22 to 42 (LWAT…VMLM), 91 to 111 (FLFW…YLVI), 124 to 144 (IGVL…VMAG), 163 to 183 (MVSY…MTSL), 206 to 226 (FIFK…IAMV), 258 to 278 (LFFL…VTLW), 299 to 319 (FSVF…IGWV), 331 to 351 (AIGL…LLIP), 357 to 377 (VSDI…YIWY), and 392 to 412 (IGWK…AVLG).

It belongs to the complex I subunit 1 family. In terms of assembly, NDH-1 is composed of 14 different subunits. Subunits NuoA, H, J, K, L, M, N constitute the membrane sector of the complex.

The protein resides in the cell inner membrane. It catalyses the reaction a quinone + NADH + 5 H(+)(in) = a quinol + NAD(+) + 4 H(+)(out). Its function is as follows. NDH-1 shuttles electrons from NADH, via FMN and iron-sulfur (Fe-S) centers, to quinones in the respiratory chain. The immediate electron acceptor for the enzyme in this species is believed to be ubiquinone. Couples the redox reaction to proton translocation (for every two electrons transferred, four hydrogen ions are translocated across the cytoplasmic membrane), and thus conserves the redox energy in a proton gradient. This subunit may bind ubiquinone. The protein is NADH-quinone oxidoreductase subunit H 1 of Koribacter versatilis (strain Ellin345).